Here is a 300-residue protein sequence, read N- to C-terminus: uncharacterized protein (300 aa).

The first 22 residues, 1–22 (MKSFVWTLLGALSLGSLTTAYG), serve as a signal peptide directing secretion.

It is found in the endoplasmic reticulum. This is an uncharacterized protein from Schizosaccharomyces pombe (strain 972 / ATCC 24843) (Fission yeast).